Reading from the N-terminus, the 156-residue chain is ATP synthase subunit b 2 (156 aa).

The helical transmembrane segment at 7 to 29 threads the bilayer; sequence LLGQAISFAIFVWFCMKYVWPPV.

The protein belongs to the ATPase B chain family. F-type ATPases have 2 components, F(1) - the catalytic core - and F(0) - the membrane proton channel. F(1) has five subunits: alpha(3), beta(3), gamma(1), delta(1), epsilon(1). F(0) has three main subunits: a(1), b(2) and c(10-14). The alpha and beta chains form an alternating ring which encloses part of the gamma chain. F(1) is attached to F(0) by a central stalk formed by the gamma and epsilon chains, while a peripheral stalk is formed by the delta and b chains.

It is found in the cell inner membrane. Its function is as follows. F(1)F(0) ATP synthase produces ATP from ADP in the presence of a proton or sodium gradient. F-type ATPases consist of two structural domains, F(1) containing the extramembraneous catalytic core and F(0) containing the membrane proton channel, linked together by a central stalk and a peripheral stalk. During catalysis, ATP synthesis in the catalytic domain of F(1) is coupled via a rotary mechanism of the central stalk subunits to proton translocation. In terms of biological role, component of the F(0) channel, it forms part of the peripheral stalk, linking F(1) to F(0). The polypeptide is ATP synthase subunit b 2 (Marinomonas sp. (strain MWYL1)).